A 414-amino-acid polypeptide reads, in one-letter code: Serine/threonine transporter SstT (414 aa).

The Cytoplasmic segment spans residues 2–15 (TTQRSPGLFRRLAH). The chain crosses the membrane as a helical span at residues 16 to 36 (GSLVKQILVGLVLGILLAWIS). Over 37 to 45 (KPAAEAVGL) the chain is Periplasmic. The helical transmembrane segment at 46–66 (LGTLFVGALKAVAPILVLMLV) threads the bilayer. The Cytoplasmic portion of the chain corresponds to 67-83 (MASIANHQHGQKTNIRP). Residues 84-104 (ILFLYLLGTFSAALAAVVFSF) traverse the membrane as a helical segment. Over 105-142 (AFPSTLHLSSSAGDISPPSGIVEVMRGLVMSMVSNPID) the chain is Periplasmic. The helical transmembrane segment at 143–163 (ALLKGNYIGILVWAIGLGFAL) threads the bilayer. At 164–179 (RHGNETTKNLVNDMSN) the chain is on the cytoplasmic side. Residues 180–200 (AVTFMVKLVIRFAPIGIFGLV) form a helical membrane-spanning segment. Topologically, residues 201-217 (SSTLATTGFSTLWGYAQ) are periplasmic. The chain crosses the membrane as a helical span at residues 218–238 (LLVVLVGCMLLVALVVNPLLV). The Cytoplasmic portion of the chain corresponds to 239 to 299 (WWKIRRNPFP…VSIPLGATIN (61 aa)). The chain crosses the membrane as a helical span at residues 300–320 (MAGAAITITVLTLAAVNTLGI). At 321–331 (PVDLPTALLLS) the chain is on the periplasmic side. The helical transmembrane segment at 332–352 (VVASLCACGASGVAGGSLLLI) threads the bilayer. Over 353–414 (PLACNMFGIS…DRLANSALRN (62 aa)) the chain is Cytoplasmic.

It belongs to the dicarboxylate/amino acid:cation symporter (DAACS) (TC 2.A.23) family.

It is found in the cell inner membrane. The enzyme catalyses L-serine(in) + Na(+)(in) = L-serine(out) + Na(+)(out). The catalysed reaction is L-threonine(in) + Na(+)(in) = L-threonine(out) + Na(+)(out). Functionally, involved in the import of serine and threonine into the cell, with the concomitant import of sodium (symport system). This chain is Serine/threonine transporter SstT, found in Shigella flexneri serotype 5b (strain 8401).